Consider the following 202-residue polypeptide: MGSVSNQQFAGAKPGEEPSGDSPKAENESQPLHGSGICKWFNVRMGFGFLSMTAKGGAMLDSPVDVFVHQSKLHMEGFRSLKEGEAVEFTFKKSSKGLESIRVTGPGGVFCIGSERRPKSKSLQKRRSKGDRCYNCGGLDHHAKECKLPPQPKKCHFCQSISHMVANCPAKAQQSPSSQGKPAYFREKEDMHSSALLPETRE.

The tract at residues 1 to 31 (MGSVSNQQFAGAKPGEEPSGDSPKAENESQP) is disordered. The CSD domain maps to 33–106 (HGSGICKWFN…GLESIRVTGP (74 aa)). Positions 107–130 (GGVFCIGSERRPKSKSLQKRRSKG) are flexible linker. 2 consecutive CCHC-type zinc fingers follow at residues 131 to 148 (DRCYNCGGLDHHAKECKL) and 153 to 170 (KKCHFCQSISHMVANCPA). Residues Cys-133, Cys-136, His-141, Cys-146, Cys-155, Cys-158, His-163, and Cys-168 each coordinate Zn(2+). Positions 169–202 (PAKAQQSPSSQGKPAYFREKEDMHSSALLPETRE) are disordered.

Belongs to the lin-28 family. As to quaternary structure, monomer.

It localises to the cytoplasm. It is found in the rough endoplasmic reticulum. Its subcellular location is the P-body. The protein localises to the stress granule. The protein resides in the nucleus. It localises to the nucleolus. Its function is as follows. RNA-binding protein that inhibits processing of pre-let-7 miRNAs and regulates translation of mRNAs that control developmental timing, pluripotency and metabolism. Seems to recognize a common structural G-quartet (G4) feature in its miRNA and mRNA targets. 'Translational enhancer' that drives specific mRNAs to polysomes and increases the efficiency of protein synthesis. Its association with the translational machinery and target mRNAs results in an increased number of initiation events per molecule of mRNA and, indirectly, in mRNA stabilization. Suppressor of microRNA (miRNA) biogenesis, including that of let-7. Binds specific target miRNA precursors (pre-miRNAs), recognizing an 5'-GGAG-3' motif found in their terminal loop, and recruits uridylyltransferase. This results in the terminal uridylation of target pre-miRNAs. Uridylated pre-miRNAs fail to be processed by Dicer and undergo degradation. Localized to the periendoplasmic reticulum area, binds to a large number of spliced mRNAs and inhibits the translation of mRNAs destined for the ER, reducing the synthesis of transmembrane proteins, ER or Golgi lumen proteins, and secretory proteins. Binds to and enhances the translation of mRNAs for several metabolic enzymes, increasing glycolysis and oxidative phosphorylation. Which, with the let-7 repression may enhance tissue repair in adult tissue. This Gallus gallus (Chicken) protein is Protein lin-28 homolog A (LIN28A).